Here is a 339-residue protein sequence, read N- to C-terminus: DNA-directed RNA polymerase RPB7 homolog (339 aa).

This sequence belongs to the Asfivirus DNA-directed RNA polymerase RPB7 homolog family. In terms of assembly, part of the viral DNA-directed RNA polymerase that consists of 8 polII-like subunits (RPB1, RPB2, RPB3, RPB5, RPB6, RPB7, RPB9, RPB10), a capping enzyme and a termination factor.

It is found in the host cytoplasm. The protein resides in the virion. Component of the DNA-directed RNA polymerase (RNAP) that catalyzes the transcription in the cytoplasm of viral DNA into RNA using the four ribonucleoside triphosphates as substrates. The sequence is that of DNA-directed RNA polymerase RPB7 homolog from African swine fever virus (strain Badajoz 1971 Vero-adapted) (Ba71V).